The sequence spans 353 residues: Aromatic amino acid aminotransferase (353 aa).

The residue at position 217 (lysine 217) is an N6-(pyridoxal phosphate)lysine.

It belongs to the class-II pyridoxal-phosphate-dependent aminotransferase family. As to quaternary structure, homodimer. Requires pyridoxal 5'-phosphate as cofactor.

The catalysed reaction is an aromatic L-alpha-amino acid + 2-oxoglutarate = an aromatic oxo-acid + L-glutamate. In terms of biological role, aminotransferase that catalyzes the conversion of aromatic amino acids and 2-oxoglutarate into corresponding aromatic oxo acids and L-glutamate. This chain is Aromatic amino acid aminotransferase, found in Mycobacterium tuberculosis (strain ATCC 25177 / H37Ra).